The primary structure comprises 37 residues: Omega/M-ectatotoxin-Et1a subunit A (37 aa).

Cysteine 12 and cysteine 34 are oxidised to a cystine.

This sequence belongs to the ectatomin family. Ectatomin-Et subfamily. In terms of assembly, heterodimer of an A and a B chain; disulfide-linked. Expressed by the venom gland.

Its subcellular location is the secreted. The protein resides in the target cell membrane. Functionally, algogenic for animals, human and insects. At high concentrations (0.5-1 uM), it acts as a pore-forming protein that forms nonselective cation channels both in cell and artificial membranes. It is weakly selective for cation over anions channel conductance is identical in both directions. At lower concentrations (1-10 nM), this heterodimer inhibits cardiac L-type calcium currents in isolated rat cardiac ventricular myocytes. This Ectatomma tuberculatum (Selva ant) protein is Omega/M-ectatotoxin-Et1a subunit A.